The chain runs to 135 residues: UPF0225 protein CV_3559 (135 aa).

The protein belongs to the UPF0225 family.

The protein is UPF0225 protein CV_3559 of Chromobacterium violaceum (strain ATCC 12472 / DSM 30191 / JCM 1249 / CCUG 213 / NBRC 12614 / NCIMB 9131 / NCTC 9757 / MK).